Here is a 278-residue protein sequence, read N- to C-terminus: HTH-type transcriptional activator RhaS (278 aa).

Positions 174 to 272 (NLLLAWLEDH…NWSPRDIRQG (99 aa)) constitute an HTH araC/xylS-type domain. 2 DNA-binding regions (H-T-H motif) span residues 191-212 (DAVADQFSLSLRTLHRQLKQQT) and 239-262 (VTDIAYRCGFSDSNHFSTLFRREF).

In terms of assembly, binds DNA as a dimer.

It is found in the cytoplasm. Activates expression of the rhaBAD and rhaT operons. The polypeptide is HTH-type transcriptional activator RhaS (Shigella flexneri serotype 5b (strain 8401)).